Reading from the N-terminus, the 213-residue chain is Kynurenine formamidase (213 aa).

Trp18 is a binding site for substrate. Residues His48, His52, and Asp54 each coordinate Zn(2+). Catalysis depends on His58, which acts as the Proton donor/acceptor. The Zn(2+) site is built by His160 and Glu172.

The protein belongs to the Cyclase 1 superfamily. KynB family. As to quaternary structure, homodimer. Requires Zn(2+) as cofactor.

It carries out the reaction N-formyl-L-kynurenine + H2O = L-kynurenine + formate + H(+). The protein operates within amino-acid degradation; L-tryptophan degradation via kynurenine pathway; L-kynurenine from L-tryptophan: step 2/2. Its function is as follows. Catalyzes the hydrolysis of N-formyl-L-kynurenine to L-kynurenine, the second step in the kynurenine pathway of tryptophan degradation. This Burkholderia multivorans (strain ATCC 17616 / 249) protein is Kynurenine formamidase.